A 505-amino-acid polypeptide reads, in one-letter code: Lysine--tRNA ligase (505 aa).

E415 and E422 together coordinate Mg(2+).

This sequence belongs to the class-II aminoacyl-tRNA synthetase family. Homodimer. Requires Mg(2+) as cofactor.

Its subcellular location is the cytoplasm. The catalysed reaction is tRNA(Lys) + L-lysine + ATP = L-lysyl-tRNA(Lys) + AMP + diphosphate. The sequence is that of Lysine--tRNA ligase from Shigella boydii serotype 4 (strain Sb227).